The chain runs to 405 residues: NADH-quinone oxidoreductase subunit D (405 aa).

This sequence belongs to the complex I 49 kDa subunit family. NDH-1 is composed of 14 different subunits. Subunits NuoB, C, D, E, F, and G constitute the peripheral sector of the complex.

It is found in the cell inner membrane. It catalyses the reaction a quinone + NADH + 5 H(+)(in) = a quinol + NAD(+) + 4 H(+)(out). NDH-1 shuttles electrons from NADH, via FMN and iron-sulfur (Fe-S) centers, to quinones in the respiratory chain. The immediate electron acceptor for the enzyme in this species is believed to be ubiquinone. Couples the redox reaction to proton translocation (for every two electrons transferred, four hydrogen ions are translocated across the cytoplasmic membrane), and thus conserves the redox energy in a proton gradient. This Afipia carboxidovorans (strain ATCC 49405 / DSM 1227 / KCTC 32145 / OM5) (Oligotropha carboxidovorans) protein is NADH-quinone oxidoreductase subunit D.